The primary structure comprises 429 residues: Phosphomethylpyrimidine synthase (429 aa).

Substrate contacts are provided by residues Asn-66, Met-95, Tyr-124, His-163, 185–187 (SRG), 226–229 (DGLR), and Glu-265. His-269 contributes to the Zn(2+) binding site. Tyr-292 contributes to the substrate binding site. His-333 is a Zn(2+) binding site. 3 residues coordinate [4Fe-4S] cluster: Cys-407, Cys-410, and Cys-414.

The protein belongs to the ThiC family. [4Fe-4S] cluster is required as a cofactor.

The enzyme catalyses 5-amino-1-(5-phospho-beta-D-ribosyl)imidazole + S-adenosyl-L-methionine = 4-amino-2-methyl-5-(phosphooxymethyl)pyrimidine + CO + 5'-deoxyadenosine + formate + L-methionine + 3 H(+). It participates in cofactor biosynthesis; thiamine diphosphate biosynthesis. In terms of biological role, catalyzes the synthesis of the hydroxymethylpyrimidine phosphate (HMP-P) moiety of thiamine from aminoimidazole ribotide (AIR) in a radical S-adenosyl-L-methionine (SAM)-dependent reaction. The protein is Phosphomethylpyrimidine synthase of Pyrococcus abyssi (strain GE5 / Orsay).